We begin with the raw amino-acid sequence, 967 residues long: Leucine--tRNA ligase (967 aa).

The 'HIGH' region motif lies at 43–53 (PYLSGHLHVGH). Residues 650 to 654 (KMSKS) carry the 'KMSKS' region motif. Lys-653 is a binding site for ATP.

Belongs to the class-I aminoacyl-tRNA synthetase family.

It localises to the cytoplasm. The catalysed reaction is tRNA(Leu) + L-leucine + ATP = L-leucyl-tRNA(Leu) + AMP + diphosphate. This Thermococcus kodakarensis (strain ATCC BAA-918 / JCM 12380 / KOD1) (Pyrococcus kodakaraensis (strain KOD1)) protein is Leucine--tRNA ligase.